Reading from the N-terminus, the 189-residue chain is UPF0301 protein Cgl3084/cg3414 (189 aa).

The protein belongs to the UPF0301 (AlgH) family.

This chain is UPF0301 protein Cgl3084/cg3414, found in Corynebacterium glutamicum (strain ATCC 13032 / DSM 20300 / JCM 1318 / BCRC 11384 / CCUG 27702 / LMG 3730 / NBRC 12168 / NCIMB 10025 / NRRL B-2784 / 534).